The chain runs to 454 residues: MSEIITNINDSIEKIKKIEEITEISAAVQGKIIDIKNVDSRLDTLNKNIVILDPIQQYLQSEEYIISTLEVLASHIISEVVENKDVQKLVDNLHINLEQITKLIPSAADKLKFDIARAEAALKGFVLPLNNGGPFDELSLMGIKDKEEIFAGPIRATKKALIAISGNSIPKEQYANAIKDKAMEILKQDPNNTPDKLEQYEKFIIQGDKNQKFNKDSNQFIPRVNKLSQIEFKELQKAATDTVHKISSRLEKNNSISKQLEQIVLIANSSGIKKSKVIIKKLNKLDSTYLSENSTKIATALKDINDKGASLWEKFKQIFTGRNYLEERLSQLVDKHITLSDGYVVKTINDRIFSNALTNPEIAVGLTKFLNKNKDKVTTNPEFKNLIPITGEHIIVQPQQVNNLNLAELRKINPITFDKTIFEDSIKLRNSNRKYPQTTPNIATKNQEAVRSKG.

This is an uncharacterized protein from Rickettsia prowazekii (strain Madrid E).